Here is a 262-residue protein sequence, read N- to C-terminus: Imidazole glycerol phosphate synthase subunit HisF (262 aa).

Catalysis depends on residues Asp-11 and Asp-130.

The protein belongs to the HisA/HisF family. Heterodimer of HisH and HisF.

The protein localises to the cytoplasm. It catalyses the reaction 5-[(5-phospho-1-deoxy-D-ribulos-1-ylimino)methylamino]-1-(5-phospho-beta-D-ribosyl)imidazole-4-carboxamide + L-glutamine = D-erythro-1-(imidazol-4-yl)glycerol 3-phosphate + 5-amino-1-(5-phospho-beta-D-ribosyl)imidazole-4-carboxamide + L-glutamate + H(+). It participates in amino-acid biosynthesis; L-histidine biosynthesis; L-histidine from 5-phospho-alpha-D-ribose 1-diphosphate: step 5/9. Its function is as follows. IGPS catalyzes the conversion of PRFAR and glutamine to IGP, AICAR and glutamate. The HisF subunit catalyzes the cyclization activity that produces IGP and AICAR from PRFAR using the ammonia provided by the HisH subunit. This is Imidazole glycerol phosphate synthase subunit HisF from Rhodopirellula baltica (strain DSM 10527 / NCIMB 13988 / SH1).